Here is a 275-residue protein sequence, read N- to C-terminus: Putative ribonuclease-like protein YfkH (275 aa).

The next 6 membrane-spanning stretches (helical) occupy residues 23-43 (LAYFFLLSLFPFLIFMLTLTA), 83-103 (LLSFGIIAALWSASNGMNAIV), 126-146 (IFLTIAMVFTILVALLLPVFG), 172-192 (WGVSPLVLLIVFSALYVIAPN), 199-219 (FVMPGAVFATIGWIIVSTLFS), and 235-255 (IGGIIVLMIWFYLSGILIILG).

The protein localises to the cell membrane. The protein is Putative ribonuclease-like protein YfkH (yfkH) of Bacillus subtilis (strain 168).